The primary structure comprises 302 residues: Aspartate carbamoyltransferase catalytic subunit (302 aa).

Carbamoyl phosphate-binding residues include Arg-53 and Thr-54. Lys-82 is a binding site for L-aspartate. The carbamoyl phosphate site is built by Arg-103, His-131, and Gln-134. The L-aspartate site is built by Arg-164 and Arg-223. Leu-260 and Pro-261 together coordinate carbamoyl phosphate.

It belongs to the aspartate/ornithine carbamoyltransferase superfamily. ATCase family. As to quaternary structure, heterooligomer of catalytic and regulatory chains.

The enzyme catalyses carbamoyl phosphate + L-aspartate = N-carbamoyl-L-aspartate + phosphate + H(+). Its pathway is pyrimidine metabolism; UMP biosynthesis via de novo pathway; (S)-dihydroorotate from bicarbonate: step 2/3. Its function is as follows. Catalyzes the condensation of carbamoyl phosphate and aspartate to form carbamoyl aspartate and inorganic phosphate, the committed step in the de novo pyrimidine nucleotide biosynthesis pathway. The sequence is that of Aspartate carbamoyltransferase catalytic subunit from Methanococcus vannielii (strain ATCC 35089 / DSM 1224 / JCM 13029 / OCM 148 / SB).